The chain runs to 711 residues: Polyribonucleotide nucleotidyltransferase (711 aa).

The FFRR loop; important for RNA binding stretch occupies residues 77-80 (FFRR). Positions 327–331 (LDVRT) are interaction with RNase E. The Mg(2+) site is built by Asp-486 and Asp-492. A KH domain is found at 553–612 (PRIHTIKINPDKIKDVIGKGGSVIRALTEETGTTIEIEDDGTVKIAATDGEKAKHAIRRI). The region spanning 622–690 (GRVYTGKVTR…RQGRIRLSIK (69 aa)) is the S1 motif domain. Positions 689-711 (IKEATEQSQPAAAPEAPAAEQGE) are disordered. The segment covering 694–711 (EQSQPAAAPEAPAAEQGE) has biased composition (low complexity).

Belongs to the polyribonucleotide nucleotidyltransferase family. Component of the RNA degradosome, which is a multiprotein complex involved in RNA processing and mRNA degradation. Interacts with RNase E (rne). Homotrimer. The homotrimer forms a ring-like structure with a central channel, where RNA molecules can bind. RNA molecules bind between neighboring subunits. Might interact with YicC. Mg(2+) serves as cofactor. The cofactor is Mn(2+).

The protein resides in the cytoplasm. The catalysed reaction is RNA(n+1) + phosphate = RNA(n) + a ribonucleoside 5'-diphosphate. Functionally, involved in mRNA degradation. Catalyzes the phosphorolysis of single-stranded polyribonucleotides processively in the 3'- to 5'-direction. Also involved, along with RNase II, in tRNA processing. RNases II and R contribute to rRNA degradation during starvation, while RNase R and PNPase are the major contributors to quality control of rRNA during steady state growth. Contributes to degradation of some small RNAs (sRNA). This chain is Polyribonucleotide nucleotidyltransferase, found in Escherichia coli (strain K12).